The following is a 423-amino-acid chain: Imidazolonepropionase (423 aa).

Fe(3+) is bound by residues His-91 and His-93. Zn(2+) is bound by residues His-91 and His-93. Arg-100, Tyr-163, and His-193 together coordinate 4-imidazolone-5-propanoate. Tyr-163 lines the N-formimidoyl-L-glutamate pocket. His-257 contributes to the Fe(3+) binding site. His-257 is a binding site for Zn(2+). Gln-260 contributes to the 4-imidazolone-5-propanoate binding site. Asp-331 provides a ligand contact to Fe(3+). Residue Asp-331 coordinates Zn(2+). Asn-333 and Gly-335 together coordinate N-formimidoyl-L-glutamate. Thr-336 contributes to the 4-imidazolone-5-propanoate binding site.

The protein belongs to the metallo-dependent hydrolases superfamily. HutI family. Zn(2+) serves as cofactor. The cofactor is Fe(3+).

Its subcellular location is the cytoplasm. It carries out the reaction 4-imidazolone-5-propanoate + H2O = N-formimidoyl-L-glutamate. It functions in the pathway amino-acid degradation; L-histidine degradation into L-glutamate; N-formimidoyl-L-glutamate from L-histidine: step 3/3. Its function is as follows. Catalyzes the hydrolytic cleavage of the carbon-nitrogen bond in imidazolone-5-propanoate to yield N-formimidoyl-L-glutamate. It is the third step in the universal histidine degradation pathway. The polypeptide is Imidazolonepropionase (Bdellovibrio bacteriovorus (strain ATCC 15356 / DSM 50701 / NCIMB 9529 / HD100)).